The primary structure comprises 513 residues: Xylose import ATP-binding protein XylG (513 aa).

ABC transporter domains lie at 5-242 (LEMK…VGRE) and 259-505 (LRVE…LRSE). 37 to 44 (GENGSGKS) lines the ATP pocket.

Belongs to the ABC transporter superfamily. Xylose importer (TC 3.A.1.2.4) family. In terms of assembly, the complex is composed of two ATP-binding proteins (XylG), two transmembrane proteins (XylH) and a solute-binding protein (XylF).

Its subcellular location is the cell inner membrane. The enzyme catalyses D-xylose(out) + ATP + H2O = D-xylose(in) + ADP + phosphate + H(+). In terms of biological role, part of the ABC transporter complex XylFGH involved in xylose import. Responsible for energy coupling to the transport system. This chain is Xylose import ATP-binding protein XylG, found in Pectobacterium atrosepticum (strain SCRI 1043 / ATCC BAA-672) (Erwinia carotovora subsp. atroseptica).